The sequence spans 469 residues: Putative dipeptidase SAUSA300_1697 (469 aa).

Residue His84 coordinates Zn(2+). Residue Asp86 is part of the active site. Asp115 contributes to the Zn(2+) binding site. Residue Glu149 is the Proton acceptor of the active site. Glu150, Asp173, and His440 together coordinate Zn(2+).

The protein belongs to the peptidase M20A family. Requires Zn(2+) as cofactor.

This chain is Putative dipeptidase SAUSA300_1697, found in Staphylococcus aureus (strain USA300).